The primary structure comprises 264 residues: Acyl-[acyl-carrier-protein]--UDP-N-acetylglucosamine O-acyltransferase (264 aa).

The protein belongs to the transferase hexapeptide repeat family. LpxA subfamily. Homotrimer.

It localises to the cytoplasm. The catalysed reaction is a (3R)-hydroxyacyl-[ACP] + UDP-N-acetyl-alpha-D-glucosamine = a UDP-3-O-[(3R)-3-hydroxyacyl]-N-acetyl-alpha-D-glucosamine + holo-[ACP]. The protein operates within glycolipid biosynthesis; lipid IV(A) biosynthesis; lipid IV(A) from (3R)-3-hydroxytetradecanoyl-[acyl-carrier-protein] and UDP-N-acetyl-alpha-D-glucosamine: step 1/6. Its function is as follows. Involved in the biosynthesis of lipid A, a phosphorylated glycolipid that anchors the lipopolysaccharide to the outer membrane of the cell. The polypeptide is Acyl-[acyl-carrier-protein]--UDP-N-acetylglucosamine O-acyltransferase (Rickettsia prowazekii (strain Madrid E)).